A 234-amino-acid chain; its full sequence is N-(5'-phosphoribosyl)anthranilate isomerase (234 aa).

A disordered region spans residues Arg211 to Gly234.

Belongs to the TrpF family.

The catalysed reaction is N-(5-phospho-beta-D-ribosyl)anthranilate = 1-(2-carboxyphenylamino)-1-deoxy-D-ribulose 5-phosphate. It functions in the pathway amino-acid biosynthesis; L-tryptophan biosynthesis; L-tryptophan from chorismate: step 3/5. The sequence is that of N-(5'-phosphoribosyl)anthranilate isomerase from Afipia carboxidovorans (strain ATCC 49405 / DSM 1227 / KCTC 32145 / OM5) (Oligotropha carboxidovorans).